A 561-amino-acid chain; its full sequence is NAD(P)H-quinone oxidoreductase chain 4 2 (561 aa).

14 consecutive transmembrane segments (helical) span residues 6-26, 36-56, 87-107, 115-135, 136-156, 169-189, 210-230, 244-264, 275-295, 312-332, 333-353, 376-396, 419-439, and 490-510; these read FPWL…IPFI, WYGL…FWKY, LSMP…FAAW, LFYF…VAQD, LMLL…LISI, FLLY…GMAL, AFEL…LAVF, SAPV…YGLI, HVYF…YGGL, VAHM…GISG, ALLQ…LAGV, IFAL…MSGF, VTVF…LSML, and VAIA…PKIA.

The protein belongs to the complex I subunit 4 family.

The protein localises to the cellular thylakoid membrane. The catalysed reaction is a plastoquinone + NADH + (n+1) H(+)(in) = a plastoquinol + NAD(+) + n H(+)(out). The enzyme catalyses a plastoquinone + NADPH + (n+1) H(+)(in) = a plastoquinol + NADP(+) + n H(+)(out). In terms of biological role, NDH-1 shuttles electrons from NAD(P)H, via FMN and iron-sulfur (Fe-S) centers, to quinones in the respiratory chain. The immediate electron acceptor for the enzyme in this species is believed to be plastoquinone. Couples the redox reaction to proton translocation (for every two electrons transferred, four hydrogen ions are translocated across the cytoplasmic membrane), and thus conserves the redox energy in a proton gradient. This is NAD(P)H-quinone oxidoreductase chain 4 2 from Trichodesmium erythraeum (strain IMS101).